The following is a 47-amino-acid chain: Large ribosomal subunit protein bL34 (47 aa).

Belongs to the bacterial ribosomal protein bL34 family.

In Rhodococcus erythropolis (strain PR4 / NBRC 100887), this protein is Large ribosomal subunit protein bL34.